The sequence spans 477 residues: Penton protein (477 aa).

The protein belongs to the adenoviridae penton family. In terms of assembly, interacts with the fiber protein (via N-terminal tail region). Interacts with the capsid vertex protein; this interaction binds the penton base to neighboring peripentonal hexons.

The protein localises to the virion. The protein resides in the host nucleus. Functionally, major capsid protein that self-associates to form penton base pentamers, each in the shape of a pentagon, situated at the 12 vertices of the pseudo T=25 capsid. Involved in virus secondary attachment to host cell after initial attachment by the fiber protein, and in endocytosis of virions. As the virus enters the host cell, penton proteins are shed concomitant with virion acidification in the endosome. The protein is Penton protein of Canis lupus familiaris (Dog).